The sequence spans 427 residues: Adenylosuccinate synthetase (427 aa).

GTP-binding positions include 12–18 (GDEGKGK) and 40–42 (GHT). Asp13 acts as the Proton acceptor in catalysis. Residues Asp13 and Gly40 each coordinate Mg(2+). Residues 13–16 (DEGK), 38–41 (NAGH), Thr128, Arg142, Gln223, Thr238, and Arg302 each bind IMP. Residue His41 is the Proton donor of the active site. 298–304 (TTTGRPR) is a substrate binding site. GTP contacts are provided by residues Arg304, 330–332 (SID), and 412–414 (SVG).

Belongs to the adenylosuccinate synthetase family. Homodimer. The cofactor is Mg(2+).

It localises to the cytoplasm. The enzyme catalyses IMP + L-aspartate + GTP = N(6)-(1,2-dicarboxyethyl)-AMP + GDP + phosphate + 2 H(+). The protein operates within purine metabolism; AMP biosynthesis via de novo pathway; AMP from IMP: step 1/2. Its function is as follows. Plays an important role in the de novo pathway of purine nucleotide biosynthesis. Catalyzes the first committed step in the biosynthesis of AMP from IMP. This Staphylococcus epidermidis (strain ATCC 12228 / FDA PCI 1200) protein is Adenylosuccinate synthetase.